Reading from the N-terminus, the 944-residue chain is Isoleucine--tRNA ligase (944 aa).

Positions 58–68 (PYANGDIHIGH) match the 'HIGH' region motif. L-isoleucyl-5'-AMP is bound at residue glutamate 568. The 'KMSKS' region motif lies at 609–613 (KMSKS). An ATP-binding site is contributed by lysine 612. Positions 907, 910, 927, and 930 each coordinate Zn(2+).

This sequence belongs to the class-I aminoacyl-tRNA synthetase family. IleS type 1 subfamily. Monomer. Zn(2+) is required as a cofactor.

It is found in the cytoplasm. The catalysed reaction is tRNA(Ile) + L-isoleucine + ATP = L-isoleucyl-tRNA(Ile) + AMP + diphosphate. Its function is as follows. Catalyzes the attachment of isoleucine to tRNA(Ile). As IleRS can inadvertently accommodate and process structurally similar amino acids such as valine, to avoid such errors it has two additional distinct tRNA(Ile)-dependent editing activities. One activity is designated as 'pretransfer' editing and involves the hydrolysis of activated Val-AMP. The other activity is designated 'posttransfer' editing and involves deacylation of mischarged Val-tRNA(Ile). In Psychromonas ingrahamii (strain DSM 17664 / CCUG 51855 / 37), this protein is Isoleucine--tRNA ligase.